The following is a 314-amino-acid chain: Formate-nitrite transporter (314 aa).

Over 1 to 47 the chain is Cytoplasmic; that stretch reads MSKGKSKYVIDPISVKTACTSEESYIRCVEYGKGKAHYPNLSLLAKA. A helical membrane pass occupies residues 48–68; that stretch reads ILAGVFVGVCAHASGIAGGHF. At 69 to 78 the chain is on the extracellular side; it reads YYHKLREYVG. A helical membrane pass occupies residues 79–99; it reads ISMSAFVYGFTFPIAFLCIIA. Over 100-128 the chain is Cytoplasmic; sequence TGSDLFTGNTLAVTTALLQRKVSLLQYLR. A helical membrane pass occupies residues 129-149; that stretch reads VMSISLFGNYLGAVSFAFFVS. Topologically, residues 150 to 185 are extracellular; it reads HLSGAYEKHTDVTKNHIFQFLNDIAEKKISHTFIQC. A helical transmembrane segment spans residues 186-206; sequence ICLAIGCNIFVCLAVYFVLTI. At 207 to 211 the chain is on the cytoplasmic side; that stretch reads KDGSG. The chain crosses the membrane as a helical span at residues 212–232; sequence MVFSVFFAVYAFAIAGYEHII. The Extracellular segment spans residues 233-257; it reads ANMYTLNLALMVEAKVTWSKVYFHN. Residues 258–278 traverse the membrane as a helical segment; that stretch reads LLPTLIGNYIAGALVLACPLF. Topologically, residues 279-314 are cytoplasmic; the sequence is YIYRNSYRDYERTRGDGSNCGLRSLSIEMQNGSNGN.

It belongs to the FNT transporter (TC 1.A.16) family. In terms of assembly, homopentamer.

Its subcellular location is the cell membrane. It is found in the vacuole membrane. The catalysed reaction is (S)-lactate(in) + H(+)(in) = (S)-lactate(out) + H(+)(out). It carries out the reaction formate(in) + H(+)(in) = formate(out) + H(+)(out). The enzyme catalyses pyruvate(out) + H(+)(out) = pyruvate(in) + H(+)(in). It catalyses the reaction acetate(out) + H(+)(out) = acetate(in) + H(+)(in). Inhibited by the Malaria Box compound MMV007839 and its derivatives BH296 and BH267.meta. Monocarboxylate-proton symporter that mediates the efflux of the waste product lactate in the intraerythrocytic parasites; active in acidic-to-neutral pH range. Transports L-lactate. The chain is Formate-nitrite transporter from Plasmodium knowlesi (strain H).